The following is a 213-amino-acid chain: Holliday junction resolvase RecU (213 aa).

Mg(2+) is bound by residues T99, D101, E114, and Q133.

This sequence belongs to the RecU family. Mg(2+) is required as a cofactor.

The protein localises to the cytoplasm. The enzyme catalyses Endonucleolytic cleavage at a junction such as a reciprocal single-stranded crossover between two homologous DNA duplexes (Holliday junction).. Functionally, endonuclease that resolves Holliday junction intermediates in genetic recombination. Cleaves mobile four-strand junctions by introducing symmetrical nicks in paired strands. Promotes annealing of linear ssDNA with homologous dsDNA. Required for DNA repair, homologous recombination and chromosome segregation. The sequence is that of Holliday junction resolvase RecU from Lactococcus lactis subsp. cremoris (strain MG1363).